A 300-amino-acid polypeptide reads, in one-letter code: MDTTLSHTPGSRLSQYLALTKPRVTQLAVFCAVIGMFLATPGMVPWKVLLGGTVGIGLLAGSAFAINCLVEQKIDAMMRRTAWRPSARGEITTLQILAFSTVLGGLGAWTLYTFTNPLTMWLTIATFVGYAVIYTLLLKPMTPQNIVIGGASGAMPPALGWAAVTGAVPGDAWILVLIIFVWTPPHFWVLALYRRKDYENAGLPMLPVTHGEQFTRLHILLYTVILFAVTMMPFISGMSGAVYLTSAVLLGAIFLAYAWKIYRDYSDALARRAFRYSIVYLSLLFAALLVDHYARPVIGM.

The next 9 membrane-spanning stretches (helical) occupy residues 24–44 (VTQLAVFCAVIGMFLATPGMV), 48–68 (VLLGGTVGIGLLAGSAFAINC), 94–114 (LQILAFSTVLGGLGAWTLYTF), 118–138 (LTMWLTIATFVGYAVIYTLLL), 146–166 (IVIGGASGAMPPALGWAAVTG), 172–192 (AWILVLIIFVWTPPHFWVLAL), 217–237 (LHILLYTVILFAVTMMPFISG), 239–259 (SGAVYLTSAVLLGAIFLAYAW), and 278–298 (IVYLSLLFAALLVDHYARPVI).

Belongs to the UbiA prenyltransferase family. Protoheme IX farnesyltransferase subfamily.

It is found in the cell inner membrane. The catalysed reaction is heme b + (2E,6E)-farnesyl diphosphate + H2O = Fe(II)-heme o + diphosphate. It functions in the pathway porphyrin-containing compound metabolism; heme O biosynthesis; heme O from protoheme: step 1/1. Functionally, converts heme B (protoheme IX) to heme O by substitution of the vinyl group on carbon 2 of heme B porphyrin ring with a hydroxyethyl farnesyl side group. The protein is Protoheme IX farnesyltransferase of Burkholderia thailandensis (strain ATCC 700388 / DSM 13276 / CCUG 48851 / CIP 106301 / E264).